Here is a 600-residue protein sequence, read N- to C-terminus: Adenine deaminase (600 aa).

The protein belongs to the metallo-dependent hydrolases superfamily. Adenine deaminase family. Mn(2+) serves as cofactor.

The catalysed reaction is adenine + H2O + H(+) = hypoxanthine + NH4(+). In Roseobacter denitrificans (strain ATCC 33942 / OCh 114) (Erythrobacter sp. (strain OCh 114)), this protein is Adenine deaminase.